The sequence spans 411 residues: Class E basic helix-loop-helix protein 40 (411 aa).

The tract at residues 1–21 (MERIPSAQPPPTCLPKTPGLE) is disordered. Residues 1–139 (MERIPSAQPP…LSGKNIEAGQ (139 aa)) form an essential for interaction with BMAL1, E-box binding and repressor activity against the CLOCK-BMAL1 heterodimer region. In terms of domain architecture, bHLH spans 52 to 107 (TYKLPHRLIEKKRRDRINECIAQLKDLLPEHLKLTTLGHLEKAVVLELTLKHVKAL). The necessary for interaction with RXRA and repressor activity against RXRA stretch occupies residues 75-79 (LKDLL). The Orange domain maps to 142 to 175 (FCSGFQTCAREVLQYLAKHENTRDLKSSQLVTHL). Lysine 159 is covalently cross-linked (Glycyl lysine isopeptide (Lys-Gly) (interchain with G-Cter in SUMO1, SUMO2 and SUMO3)). Lysine 167 is covalently cross-linked (Glycyl lysine isopeptide (Lys-Gly) (interchain with G-Cter in SUMO2)). The tract at residues 186–293 (SASRKPLDSA…EPPTKKSRMQ (108 aa)) is disordered. Serine 235 is modified (phosphoserine). Positions 248–271 (ELEKGDLRSEQPYFKSDHGRRFTV) are enriched in basic and acidic residues. Residue lysine 279 forms a Glycyl lysine isopeptide (Lys-Gly) (interchain with G-Cter in SUMO1); alternate linkage. Residue lysine 279 forms a Glycyl lysine isopeptide (Lys-Gly) (interchain with G-Cter in SUMO1, SUMO2 and SUMO3); alternate linkage. Residue lysine 279 forms a Glycyl lysine isopeptide (Lys-Gly) (interchain with G-Cter in SUMO2); alternate linkage. A Glycyl lysine isopeptide (Lys-Gly) (interchain with G-Cter in SUMO2) cross-link involves residue lysine 288. Serine 383 carries the post-translational modification Phosphoserine.

As to quaternary structure, homodimer. Heterodimer with BHLHE41/DEC2. Interacts with TCF3/E47. Interacts with ubiquitin-conjugating enzyme UBE2I/UBC9. Interacts with HDAC1, SUMO1, RXRA and BMAL1. In terms of processing, ubiquitinated; which may lead to proteasomal degradation. Sumoylation inhibits its ubiquitination and promotes its negative regulation of the CLOCK-BMAL1 heterodimer transcriptional activator activity. Expressed in heart, spleen, lung, liver, muscle, kidney, uterus and gut. Highly expressed in the cerebral cortex, especially in the fifth layer, thalamus, superior colliculus, olfactory bulb, piriform cortex, hippocampus and hypothalamic nuclei.

The protein localises to the cytoplasm. It is found in the nucleus. Functionally, transcriptional repressor involved in the regulation of the circadian rhythm by negatively regulating the activity of the clock genes and clock-controlled genes. Acts as the negative limb of a novel autoregulatory feedback loop (DEC loop) which differs from the one formed by the PER and CRY transcriptional repressors (PER/CRY loop). Both these loops are interlocked as it represses the expression of PER1/2 and in turn is repressed by PER1/2 and CRY1/2. Represses the activity of the circadian transcriptional activator: CLOCK-BMAL1|BMAL2 heterodimer by competing for the binding to E-box elements (5'-CACGTG-3') found within the promoters of its target genes. Negatively regulates its own expression and the expression of DBP and BHLHE41/DEC2. Acts as a corepressor of RXR and the RXR-LXR heterodimers and represses the ligand-induced RXRA and NR1H3/LXRA transactivation activity. May be involved in the regulation of chondrocyte differentiation via the cAMP pathway. Represses the transcription of NR0B2 and attentuates the transactivation of NR0B2 by the CLOCK-BMAL1 complex. Drives the circadian rhythm of blood pressure through transcriptional repression of ATP1B1 in the cardiovascular system. The polypeptide is Class E basic helix-loop-helix protein 40 (Bhlhe40) (Rattus norvegicus (Rat)).